A 326-amino-acid chain; its full sequence is MLEFETIDINLTKKKNLSQKEVDFIEDVIIVGSGPAGLTAGIYSVMSNYKAAILEGPEPGGQLTTTTEVYNYPGFKNGISGRNLMLNMREQVVNLGAKTFPETVFSIKRKGNIFYLYTENYIYKSKAVIIAVGSKPKKLETLKNSGLFWNKGISVCAICDGHLFKGKRVAVIGGGNTALSESIYLSKLVDKVYLIVRKNNLRAIAMLRDSVAKLPNIEILYNSEAIEVDGKSSVSSVKIFNKKDNVVYELEVSAVFMAVGYKPNTEFLKGFLDLDEEGFIVTKDVVKTSVDGVFSCGDVSNKLYAQAITAAAEGFIASVELGNFLK.

Residue 55 to 62 (EGPEPGGQ) participates in FAD binding. A disulfide bond links C156 and C159. 298–307 (DVSNKLYAQA) contributes to the FAD binding site.

This sequence belongs to the class-II pyridine nucleotide-disulfide oxidoreductase family. Homodimer. The cofactor is FAD.

The protein localises to the cytoplasm. It catalyses the reaction [thioredoxin]-dithiol + NADP(+) = [thioredoxin]-disulfide + NADPH + H(+). The sequence is that of Thioredoxin reductase (trxB) from Borreliella burgdorferi (strain ATCC 35210 / DSM 4680 / CIP 102532 / B31) (Borrelia burgdorferi).